We begin with the raw amino-acid sequence, 87 residues long: Cell division topological specificity factor (87 aa).

Belongs to the MinE family.

Prevents the cell division inhibition by proteins MinC and MinD at internal division sites while permitting inhibition at polar sites. This ensures cell division at the proper site by restricting the formation of a division septum at the midpoint of the long axis of the cell. The protein is Cell division topological specificity factor of Roseiflexus sp. (strain RS-1).